A 267-amino-acid chain; its full sequence is Sepiapterin reductase (267 aa).

Residue methionine 1 is modified to N-acetylmethionine. 20 to 26 (GASRGFG) serves as a coordination point for NADP(+). Phosphoserine is present on serine 38. NADP(+) is bound by residues 48–49 (RN) and 75–76 (DL). Substrate contacts are provided by residues 163 to 164 (SI) and tyrosine 176. An NADP(+)-binding site is contributed by lysine 180. Serine 201 carries the phosphoserine modification. Glycine 205 provides a ligand contact to substrate. 207-212 (LDTDMQ) contacts NADP(+). At serine 219 the chain carries Phosphoserine. Residue aspartate 263 participates in substrate binding.

The protein belongs to the sepiapterin reductase family. In terms of assembly, homodimer.

Its subcellular location is the cytoplasm. The catalysed reaction is L-erythro-7,8-dihydrobiopterin + NADP(+) = L-sepiapterin + NADPH + H(+). The enzyme catalyses (6R)-L-erythro-5,6,7,8-tetrahydrobiopterin + 2 NADP(+) = 6-pyruvoyl-5,6,7,8-tetrahydropterin + 2 NADPH + 2 H(+). Catalyzes the final one or two reductions in tetra-hydrobiopterin biosynthesis to form 5,6,7,8-tetrahydrobiopterin. In Bos taurus (Bovine), this protein is Sepiapterin reductase (SPR).